The sequence spans 117 residues: Conotoxin vil14.2 (117 aa).

An N-terminal signal peptide occupies residues 1 to 22 (MGFRVLVLVVMATTFALPFTFF). Residues 23-90 (EEPGRSPFRP…FAELSVGQRR (68 aa)) constitute a propeptide that is removed on maturation. Residues 53-77 (RADGQPPDMRQPEMRRPEMRRPEVR) form a disordered region. Over residues 62-77 (RQPEMRRPEMRRPEVR) the composition is skewed to basic and acidic residues. Intrachain disulfides connect C96–C116 and C100–C112.

The protein belongs to the conotoxin R superfamily. In terms of tissue distribution, expressed by the venom duct.

The protein resides in the secreted. The protein is Conotoxin vil14.2 of Conus villepinii (Villepin's cone).